The primary structure comprises 231 residues: GSK-3-binding protein FRAT2 (231 aa).

Disordered stretches follow at residues 1 to 24 (MPCRREEEEEAGDEAEGEEDDDSF) and 53 to 109 (DTAH…PGAV). Acidic residues predominate over residues 7–23 (EEEEAGDEAEGEEDDDS). Positions 172 to 194 (DPHRLLQQLVLSGNLIKEAVRRL) are involved in GSK-3 binding. Positions 203 to 231 (ATSPASAPGSGGGRSGPDSVTLQPSGAWL) are disordered.

It belongs to the GSK-3-binding protein family. Binds GSK-3 and prevents GSK-3-dependent phosphorylation.

Positively regulates the Wnt signaling pathway by stabilizing beta-catenin through the association with GSK-3. This chain is GSK-3-binding protein FRAT2 (Frat2), found in Mus musculus (Mouse).